Here is a 1185-residue protein sequence, read N- to C-terminus: MSLLNPVLLPPKVKAYLSQGERFIKWDDETTVASPVILRVDPKGYYLYWTYQSKEMEFLDITSIRDTRFGKFAKMPKSQKLRDVFNMDFPDNSFLLKTLTVVSGPDMVDLTFHNFVSYKENVGKAWAEDVLALVKHPLTANASRSTFLDKILVKLKMQLNSEGKIPVKNFFQMFPADRKRVEAALSACHLPKGKNDAINPEDFPEPVYKSFLMSLCPRPEIDEIFTSYHAKAKPYMTKEHLTKFINQKQRDSRLNSLLFPPARPDQVQGLIDKYEPSGINAQRGQLSPEGMVWFLCGPENSVLAQDKLLLHHDMTQPLNHYFINSSHNTYLTAGQFSGLSSAEMYRQVLLSGCRCVELDCWKGKPPDEEPIITHGFTMTTDIFFKEAIEAIAESAFKTSPYPIILSFENHVDSPRQQAKMAEYCRTIFGDMLLTEPLEKFPLKPGVPLPSPEDLRGKILIKNKKNQFSGPTSSSKDTGGEAEGSSPPSAPAGEGTVWAGEEGTELEEEEVEEEEEEESGNLDEEEIKKMQSDEGTAGLEVTAYEEMSSLVNYIQPTKFVSFEFSAQKNRSYVISSFTELKAYDLLSKASVQFVDYNKRQMSRIYPKGTRMDSSNYMPQMFWNAGCQMVALNFQTMDLPMQQNMAVFEFNGQSGYLLKHEFMRRPDKQFNPFSVDRIDVVVATTLSITVISGQFLSERSVRTYVEVELFGLPGDPKRRYRTKLSPSTNSINPVWKEEPFVFEKILMPELASLRVAVMEEGNKFLGHRIIPINALNSGYHHLCLHSESNMPLTMPALFIFLEMKDYIPGAWADLTVALANPIKFFSAHDTKSVKLKEAMGGLPEKPFPLASPVASQVNGALAPTSNGSPAARAGAREEAMKEAAEPRTASLEELRELKGVVKLQRRHEKELRELERRGARRWEELLQRGAAQLAELGPPGVGGVGACKLGPGKGSRKKRSLPREESAGAAPGEGPEGVDGRVRELKDRLELELLRQGEEQYECVLKRKEQHVAEQISKMMELAREKQAAELKALKETSENDTKEMKKKLETKRLERIQGMTKVTTDKMAQERLKREINNSHIQEVVQVIKQMTENLERHQEKLEEKQAACLEQIREMEKQFQKEALAEYEARMKGLEAEVKESVRACLRTCFPSEAKDKPERACECPPELCEQDPLIAKADAQESRL.

In terms of domain architecture, PI-PLC X-box spans 312-463 (HDMTQPLNHY…LRGKILIKNK (152 aa)). Histidine 327 is a catalytic residue. Ca(2+)-binding residues include asparagine 328, glutamate 357, and aspartate 359. Histidine 374 is a catalytic residue. Residue glutamate 408 participates in Ca(2+) binding. The disordered stretch occupies residues 460–533 (IKNKKNQFSG…EEIKKMQSDE (74 aa)). Polar residues predominate over residues 465–476 (NQFSGPTSSSKD). A compositionally biased stretch (acidic residues) spans 501 to 524 (EGTELEEEEVEEEEEEESGNLDEE). The PI-PLC Y-box domain maps to 546–662 (MSSLVNYIQP…GYLLKHEFMR (117 aa)). The region spanning 662–790 (RRPDKQFNPF…CLHSESNMPL (129 aa)) is the C2 domain. Disordered stretches follow at residues 859-888 (LAPT…RTAS) and 943-979 (GACK…VDGR). The segment covering 872-888 (GAREEAMKEAAEPRTAS) has biased composition (basic and acidic residues). The residue at position 953 (serine 953) is a Phosphoserine. Residues 988–1147 (ELELLRQGEE…VKESVRACLR (160 aa)) adopt a coiled-coil conformation.

As to quaternary structure, interacts with RAC1. Forms a complex composed of at least WDR26, a G-beta:gamma unit, and PLCB2. Requires Ca(2+) as cofactor.

It catalyses the reaction a 1,2-diacyl-sn-glycero-3-phospho-(1D-myo-inositol-4,5-bisphosphate) + H2O = 1D-myo-inositol 1,4,5-trisphosphate + a 1,2-diacyl-sn-glycerol + H(+). The catalysed reaction is a 1,2-diacyl-sn-glycero-3-phospho-(1D-myo-inositol) + H2O = 1D-myo-inositol 1-phosphate + a 1,2-diacyl-sn-glycerol + H(+). Functionally, the production of the second messenger molecules diacylglycerol (DAG) and inositol 1,4,5-trisphosphate (IP3) is mediated by activated phosphatidylinositol-specific phospholipase C enzymes. In neutrophils, participates in a phospholipase C-activating N-formyl peptide-activated GPCR (G protein-coupled receptor) signaling pathway by promoting RASGRP4 activation by DAG, to promote neutrophil functional responses. This chain is 1-phosphatidylinositol 4,5-bisphosphate phosphodiesterase beta-2, found in Homo sapiens (Human).